An 89-amino-acid chain; its full sequence is Small ribosomal subunit protein uS15 (89 aa).

This sequence belongs to the universal ribosomal protein uS15 family. Part of the 30S ribosomal subunit. Forms a bridge to the 50S subunit in the 70S ribosome, contacting the 23S rRNA.

Functionally, one of the primary rRNA binding proteins, it binds directly to 16S rRNA where it helps nucleate assembly of the platform of the 30S subunit by binding and bridging several RNA helices of the 16S rRNA. Its function is as follows. Forms an intersubunit bridge (bridge B4) with the 23S rRNA of the 50S subunit in the ribosome. The polypeptide is Small ribosomal subunit protein uS15 (Allorhizobium ampelinum (strain ATCC BAA-846 / DSM 112012 / S4) (Agrobacterium vitis (strain S4))).